The sequence spans 158 residues: 18.2 kDa class I heat shock protein (158 aa).

A sHSP domain is found at Glu-44 to Gly-158.

The protein belongs to the small heat shock protein (HSP20) family. In terms of assembly, forms oligomeric structures.

The protein localises to the cytoplasm. The sequence is that of 18.2 kDa class I heat shock protein (HSP18.2) from Medicago sativa (Alfalfa).